A 133-amino-acid polypeptide reads, in one-letter code: Large ribosomal subunit protein bL17 (133 aa).

It belongs to the bacterial ribosomal protein bL17 family. Part of the 50S ribosomal subunit. Contacts protein L32.

This is Large ribosomal subunit protein bL17 from Ehrlichia chaffeensis (strain ATCC CRL-10679 / Arkansas).